Reading from the N-terminus, the 271-residue chain is 2,3,4,5-tetrahydropyridine-2,6-dicarboxylate N-succinyltransferase (271 aa).

Residues arginine 103 and aspartate 140 each contribute to the substrate site.

Belongs to the transferase hexapeptide repeat family. Homotrimer.

Its subcellular location is the cytoplasm. It carries out the reaction (S)-2,3,4,5-tetrahydrodipicolinate + succinyl-CoA + H2O = (S)-2-succinylamino-6-oxoheptanedioate + CoA. The protein operates within amino-acid biosynthesis; L-lysine biosynthesis via DAP pathway; LL-2,6-diaminopimelate from (S)-tetrahydrodipicolinate (succinylase route): step 1/3. This chain is 2,3,4,5-tetrahydropyridine-2,6-dicarboxylate N-succinyltransferase, found in Methylococcus capsulatus (strain ATCC 33009 / NCIMB 11132 / Bath).